Consider the following 346-residue polypeptide: tRNA N6-adenosine threonylcarbamoyltransferase (346 aa).

Residues His-111 and His-115 each contribute to the Fe cation site. Substrate is bound by residues 134–138 (LVSGG), Asp-167, Gly-180, and Asn-279. Asp-307 is a binding site for Fe cation.

It belongs to the KAE1 / TsaD family. Fe(2+) serves as cofactor.

It localises to the cytoplasm. The enzyme catalyses L-threonylcarbamoyladenylate + adenosine(37) in tRNA = N(6)-L-threonylcarbamoyladenosine(37) in tRNA + AMP + H(+). Required for the formation of a threonylcarbamoyl group on adenosine at position 37 (t(6)A37) in tRNAs that read codons beginning with adenine. Is involved in the transfer of the threonylcarbamoyl moiety of threonylcarbamoyl-AMP (TC-AMP) to the N6 group of A37, together with TsaE and TsaB. TsaD likely plays a direct catalytic role in this reaction. The chain is tRNA N6-adenosine threonylcarbamoyltransferase from Burkholderia lata (strain ATCC 17760 / DSM 23089 / LMG 22485 / NCIMB 9086 / R18194 / 383).